The primary structure comprises 481 residues: Sphingosine kinase 2 (481 aa).

A DAGKc domain is found at 111 to 253; the sequence is GRPKRLLVFV…VDVATIAQGN (143 aa). Residues 121–123 and threonine 153 each bind ATP; that span reads NPF. 178-181 is a binding site for substrate; the sequence is SGDG. Aspartate 180 (proton donor/acceptor) is an active-site residue. Residues glutamate 185 and 210–212 each bind ATP; that span reads GTG. Position 271 (aspartate 271) interacts with substrate. ATP-binding positions include arginine 278, arginine 284, and 441-443; that span reads DGE.

Mg(2+) is required as a cofactor. Highly expressed in flowers and siliques and at lower levels in roots, leaves and stems.

The protein resides in the vacuole membrane. The enzyme catalyses a sphingoid base + ATP = a sphingoid 1-phosphate + ADP + H(+). Its activity is regulated as follows. Activated by phosphatidic acid (PA). Binding with PA stimulates the activity by promoting the binding of substrate to the catalytic site. Involved in the production of sphingolipid metabolites. Phosphorylates sphingosine and various l sphingoid long-chain base (LCB) products, such as phytosphingosine (PHS, 4-hydroxysphinganine), 4-hydroxy-8-sphingenine, 4,8-sphingadienine and D-erythro-dihydrosphingosine, but has a very few activity toward D,L-threo- dihydrosphingosine. Is required for abscisic acid (ABA) signaling that mediates stomatal closure, inhibition of seed germination and root elongation. May function upstream of PLDALPHA1 and phosphatidic acid (PA) in an amplification response to ABA that mediates stomatal closure. This chain is Sphingosine kinase 2 (SPHK2), found in Arabidopsis thaliana (Mouse-ear cress).